Consider the following 430-residue polypeptide: Cyclin-A2 (430 aa).

Position 1 is an N-acetylmethionine (M1). Disordered regions lie at residues 1–80 (MLGS…PIND) and 106–129 (EEIQ…FNSA). S5 is modified (phosphoserine). Positions 107–120 (EIQKRPTESKKSES) are enriched in basic and acidic residues.

The protein belongs to the cyclin family. Cyclin AB subfamily. As to quaternary structure, interacts with the CDK1 and CDK2 protein kinases to form serine/threonine kinase holoenzyme complexes. Interacts with CDK1 (hyperphosphorylated form in G1 and underphosphorylated forms in S and G2). Interacts with CDK2; the interaction increases from G1 to G2. Interacts (associated with CDK2 but not with CDK1) with SCAPER; regulates the activity of CCNA2/CDK2 by transiently maintaining CCNA2 in the cytoplasm. Forms a ternary complex with CDK2 and CDKN1B; CDKN1B inhibits the kinase activity of CDK2 through conformational rearrangements. Interacts with INCA1. Polyubiquitinated via 'Lys-11'-linked ubiquitin by the anaphase-promoting complex (APC/C), leading to its degradation by the proteasome. Deubiquitinated and stabilized by USP37 enables entry into S phase. Ubiquitinated during the G1 phase by the SCF(FBXO31) complex, leading to its proteasomal degradation.

The protein resides in the nucleus. It is found in the cytoplasm. Its function is as follows. Cyclin which controls both the G1/S and the G2/M transition phases of the cell cycle. Functions through the formation of specific serine/threonine kinase holoenzyme complexes with the cyclin-dependent protein kinases CDK1 and CDK2. The cyclin subunit confers the substrate specificity of these complexes and differentially interacts with and activates CDK1 and CDK2 throughout the cell cycle. This Bos taurus (Bovine) protein is Cyclin-A2.